The primary structure comprises 25 residues: Small ribosomal subunit protein eS32 eS32z/eS32y/eS32x/eS32w/eS32v (25 aa).

A disordered region spans residues 1–25 (MRAKWKKKRMRRLKRKRRKMRQRSK).

Belongs to the eukaryotic ribosomal protein eS32 family. Component of the small ribosomal subunit (SSU).

This chain is Small ribosomal subunit protein eS32 eS32z/eS32y/eS32x/eS32w/eS32v (RPL41A), found in Arabidopsis thaliana (Mouse-ear cress).